A 214-amino-acid polypeptide reads, in one-letter code: MVIKVFVATSSGSIAIRKKQQEVVGFLEANKIDFKELDIAGDEDNRKWMRENVPGEKKPQNGIPLPPQIFNEEQYCGDFDSFFSAKEENIIYSFLGLAPPPGSKVTKSEEASSLPNGDVAGEAEGAAEGTEKAEKSGENEAQKEDSEDTGELSESQEKKEEEGEDGEEGEEGEEREEGGEGETTGETEEAPEEGAGGEAEEEEPEEEAGEGEDS.

Positions 61–67 (NGIPLPP) match the SH3-binding motif. The interval 101-214 (PGSKVTKSEE…EEEAGEGEDS (114 aa)) is disordered. Positions 129 to 144 (GTEKAEKSGENEAQKE) are enriched in basic and acidic residues. Acidic residues-rich tracts occupy residues 162 to 192 (EGED…EAPE) and 198 to 214 (EAEE…GEDS).

The protein belongs to the SH3BGR family.

This chain is SH3 domain-binding glutamic acid-rich protein (Sh3bgr), found in Mus musculus (Mouse).